Consider the following 257-residue polypeptide: MLAVLSPAKKLDETLHPSARLHTLPELLPHTQNLIEQLRGYDAAQLAHLMKLSPTLAELNVQRYQAFHFPFTPANAKAALFMFQGDTYVGLQAGSMDEQALLFAQQHLRILSGLYGVLRPLDLIQPYRLEMGTALVNGRGKDLYAYWGEHLVERLNAASESHGERTLINLASIEYFKGVKRAKLAGALITPIFKEVKGGEAKVIGLMAKRARGMMARYMINQRLESPEPLKTFNQGGYVYQPKLSTAEQWVFTRSAA.

Belongs to the UPF0246 family.

This chain is UPF0246 protein Mmc1_3117, found in Magnetococcus marinus (strain ATCC BAA-1437 / JCM 17883 / MC-1).